A 2517-amino-acid polypeptide reads, in one-letter code: Serine/threonine-protein kinase ATR (2517 aa).

Residues 1178–1214 (EPMLEQIVNVLMAGCQHDDSQLQMASAKCLGELGAID) form an HEAT repeat. In terms of domain architecture, FAT spans 1509–2066 (LVSRASYNCG…LWMLLPHFKS (558 aa)). Ser-1569 is subject to Phosphoserine. Phosphotyrosine is present on Tyr-1570. Ser-1573 carries the post-translational modification Phosphoserine. Thr-1575 carries the post-translational modification Phosphothreonine. The PI3K/PI4K catalytic domain maps to 2184 to 2508 (FQESVLILRS…EATKVDNLAS (325 aa)). The segment at 2190–2196 (ILRSAAK) is G-loop. Residues 2360 to 2368 (GLGDRHGEN) are catalytic loop. An activation loop region spans residues 2380–2404 (HVDFNCLFNQGELLPYPEVVPFRLT). The 33-residue stretch at 2485–2517 (IPLSTEGQVNFLINEATKVDNLASMYIGWGAFL) folds into the FATC domain.

The protein belongs to the PI3/PI4-kinase family. ATM subfamily. Interacts with mus304. Mn(2+) serves as cofactor.

It is found in the nucleus. The enzyme catalyses L-seryl-[protein] + ATP = O-phospho-L-seryl-[protein] + ADP + H(+). The catalysed reaction is L-threonyl-[protein] + ATP = O-phospho-L-threonyl-[protein] + ADP + H(+). Functionally, serine/threonine protein kinase which activates checkpoint signaling upon genotoxic stresses such as ionizing radiation (IR), ultraviolet light (UV), or DNA replication stalling, thereby acting as a DNA damage sensor. Recognizes the substrate consensus sequence [ST]-Q. Phosphorylates various proteins, which collectively inhibits DNA replication and mitosis and promotes DNA repair and recombination. Phosphorylates grp/CHK1. Phosphorylates 'Ser-137' of histone variant H2AX/H2AV at sites of DNA damage, thereby regulating DNA damage response mechanism. Essential for the DNA damage checkpoint in larval imaginal disks and neuroblasts and for the DNA replication checkpoint in the embryo. Also has an essential role during early nuclear divisions in embryos, where it is required to delay mitosis in response to incomplete DNA replication. Also plays an important role during meiosis, where it may monitor double-strand-break repair during meiotic crossing over, to regulate the progression of prophase I, and to enforce metaphase I delay observed at the end of oogenesis. Involved in telomere maintenance and prevention of telomere fusion; potentially functioning downstream of moi/modigliani. In Drosophila melanogaster (Fruit fly), this protein is Serine/threonine-protein kinase ATR (mei-41).